Here is a 261-residue protein sequence, read N- to C-terminus: Cytochrome c oxidase subunit 3 (261 aa).

The Mitochondrial matrix portion of the chain corresponds to 1–15 (MTHQTHAYHMVNPSP). Residues 16–34 (WPLTGALSALLMTSGLIMW) traverse the membrane as a helical segment. Over 35 to 40 (FHFNST) the chain is Mitochondrial intermembrane. The helical transmembrane segment at 41-66 (ILLMLGLTTNMLTMYQWWRDVIREST) threads the bilayer. Residues 67-72 (FQGHHT) are Mitochondrial matrix-facing. The chain crosses the membrane as a helical span at residues 73–105 (PNVQKGLRYGMILFIISEVLFFTGFFWAFYHSS). At 106–128 (LAPTPELGGCWPPTGIHPLNPLE) the chain is on the mitochondrial intermembrane side. Residues 129–152 (VPLLNTSVLLASGVSITWAHHSLM) traverse the membrane as a helical segment. The Mitochondrial matrix portion of the chain corresponds to 153–155 (EGN). Residues 156-183 (RNHMLQALFITIALGVYFTLLQASEYYE) form a helical membrane-spanning segment. Over 184 to 190 (APFTISD) the chain is Mitochondrial intermembrane. The helical transmembrane segment at 191 to 223 (GVYGSTFFVATGFHGLHVIIGSTFLIVCFFRQL) threads the bilayer. Residues 224–232 (KFHFTSNHH) are Mitochondrial matrix-facing. A helical membrane pass occupies residues 233 to 256 (FGFEAAAWYWHFVDVVWLFLYVSI). The Mitochondrial intermembrane segment spans residues 257–261 (YWWGS).

This sequence belongs to the cytochrome c oxidase subunit 3 family. In terms of assembly, component of the cytochrome c oxidase (complex IV, CIV), a multisubunit enzyme composed of 14 subunits. The complex is composed of a catalytic core of 3 subunits MT-CO1, MT-CO2 and MT-CO3, encoded in the mitochondrial DNA, and 11 supernumerary subunits COX4I, COX5A, COX5B, COX6A, COX6B, COX6C, COX7A, COX7B, COX7C, COX8 and NDUFA4, which are encoded in the nuclear genome. The complex exists as a monomer or a dimer and forms supercomplexes (SCs) in the inner mitochondrial membrane with NADH-ubiquinone oxidoreductase (complex I, CI) and ubiquinol-cytochrome c oxidoreductase (cytochrome b-c1 complex, complex III, CIII), resulting in different assemblies (supercomplex SCI(1)III(2)IV(1) and megacomplex MCI(2)III(2)IV(2)).

Its subcellular location is the mitochondrion inner membrane. It catalyses the reaction 4 Fe(II)-[cytochrome c] + O2 + 8 H(+)(in) = 4 Fe(III)-[cytochrome c] + 2 H2O + 4 H(+)(out). Its function is as follows. Component of the cytochrome c oxidase, the last enzyme in the mitochondrial electron transport chain which drives oxidative phosphorylation. The respiratory chain contains 3 multisubunit complexes succinate dehydrogenase (complex II, CII), ubiquinol-cytochrome c oxidoreductase (cytochrome b-c1 complex, complex III, CIII) and cytochrome c oxidase (complex IV, CIV), that cooperate to transfer electrons derived from NADH and succinate to molecular oxygen, creating an electrochemical gradient over the inner membrane that drives transmembrane transport and the ATP synthase. Cytochrome c oxidase is the component of the respiratory chain that catalyzes the reduction of oxygen to water. Electrons originating from reduced cytochrome c in the intermembrane space (IMS) are transferred via the dinuclear copper A center (CU(A)) of subunit 2 and heme A of subunit 1 to the active site in subunit 1, a binuclear center (BNC) formed by heme A3 and copper B (CU(B)). The BNC reduces molecular oxygen to 2 water molecules using 4 electrons from cytochrome c in the IMS and 4 protons from the mitochondrial matrix. In Eudorcas thomsonii (Thomson's gazelle), this protein is Cytochrome c oxidase subunit 3 (MT-CO3).